Consider the following 286-residue polypeptide: Pantothenate synthetase (286 aa).

Residue 30–37 coordinates ATP; sequence MGALHEGH. The active-site Proton donor is the histidine 37. Glutamine 61 is a binding site for (R)-pantoate. Position 61 (glutamine 61) interacts with beta-alanine. 147–150 is an ATP binding site; sequence GEKD. Residue glutamine 153 coordinates (R)-pantoate. ATP is bound by residues leucine 176 and 184–187; that span reads HSSR.

It belongs to the pantothenate synthetase family. As to quaternary structure, homodimer.

The protein resides in the cytoplasm. It carries out the reaction (R)-pantoate + beta-alanine + ATP = (R)-pantothenate + AMP + diphosphate + H(+). The protein operates within cofactor biosynthesis; (R)-pantothenate biosynthesis; (R)-pantothenate from (R)-pantoate and beta-alanine: step 1/1. Catalyzes the condensation of pantoate with beta-alanine in an ATP-dependent reaction via a pantoyl-adenylate intermediate. The sequence is that of Pantothenate synthetase from Bartonella tribocorum (strain CIP 105476 / IBS 506).